A 210-amino-acid polypeptide reads, in one-letter code: Troponin I, cardiac muscle (210 aa).

The segment at 1-43 (MADGSSDAAREPRPAPAPIRRRSSNYRAYATEPHAKKKSKISA) is disordered. Ala-2 is subject to N-acetylalanine. 2 positions are modified to phosphoserine: Ser-5 and Ser-6. 2 positions are modified to phosphoserine; by PKA and PKD/PRKD1: Ser-23 and Ser-24. Tyr-26 is subject to Phosphotyrosine. Thr-31 bears the Phosphothreonine; by STK4/MST1 mark. The interval 32–79 (EPHAKKKSKISASRKLQLKTLLLQIAKQELEREAEERRGEKGRALSTR) is involved in binding TNC. Ser-42 and Ser-44 each carry phosphoserine; by PKC/PRKCE. Residue Thr-51 is modified to Phosphothreonine; by STK4/MST1. At Ser-77 the chain carries Phosphoserine. Thr-78 carries the post-translational modification Phosphothreonine. 2 positions are modified to phosphothreonine; by STK4/MST1: Thr-129 and Thr-143. The involved in binding TNC and actin stretch occupies residues 129 to 149 (TQKIFDLRGKFKRPTLRRVRI). Phosphoserine; by PAK3 is present on Ser-150. Position 166 is a phosphoserine (Ser-166). Thr-181 carries the post-translational modification Phosphothreonine. Ser-199 carries the phosphoserine modification.

This sequence belongs to the troponin I family. Binds to actin and tropomyosin. Interacts with TRIM63. Interacts with STK4/MST1. In terms of processing, phosphorylated at Ser-42 and Ser-44 by PRKCE; phosphorylation increases myocardium contractile dysfunction. Phosphorylated at Ser-23 and Ser-24 by PRKD1; phosphorylation reduces myofilament calcium sensitivity. Phosphorylated preferentially at Thr-31. Phosphorylation by STK4/MST1 alters its binding affinity to TNNC1 (cardiac Tn-C) and TNNT2 (cardiac Tn-T).

Functionally, troponin I is the inhibitory subunit of troponin, the thin filament regulatory complex which confers calcium-sensitivity to striated muscle actomyosin ATPase activity. The chain is Troponin I, cardiac muscle (TNNI3) from Homo sapiens (Human).